Reading from the N-terminus, the 525-residue chain is Histidine-rich glycoprotein (525 aa).

A signal peptide spans 1–18 (MKVLTTALLLVTLQCSHA). Positions 19 to 122 (LSPTNCDASE…ESQDLSVNGY (104 aa)) constitute a Cystatin 1 domain. Cystine bridges form between Cys-24–Cys-504, Cys-78–Cys-89, Cys-103–Cys-124, Cys-201–Cys-414, and Cys-216–Cys-239. The interaction with ATP5F1A stretch occupies residues 41 to 84 (GRRSGYVFELLRVSDAHLDRAGTATVYYLALDVIESDCWVLSTK). 3 N-linked (GlcNAc...) asparagine glycosylation sites follow: Asn-112, Asn-123, and Asn-200. Positions 135 to 240 (NTKDSPVLLD…TPDSIDINCE (106 aa)) constitute a Cystatin 2 domain. The interval 273 to 447 (GSRDHHHTHK…SRKRGPGKGL (175 aa)) is disordered. Residues 293–303 (EGKDNSDRPRL) show a composition bias toward basic and acidic residues. N-linked (GlcNAc...) asparagine glycosylation is found at Asn-322 and Asn-330. Residues 339–404 (HGHRPHGHHP…GHHPHGHHPH (66 aa)) are compositionally biased toward basic residues. The necessary for endothelial cell focal adhesions and anti-angiogenic activities stretch occupies residues 345–379 (GHHPHSHHPPGHHSHGHHPHGHHPHSHHSHGHHPP). Residue Ser-438 is modified to Phosphoserine.

In terms of assembly, interacts with THBS1 (via the TSP type I repeats); the interaction blocks the antiangiogenic effect of THBS1 with CD36. Interacts with HPSE; the interaction is enhanced at acidic pH, partially inhibits binding of HPSE to cell surface receptors and modulates its enzymatic activity. Interacts (via the HRR domain) with TMP1; the interaction partially mediates the antiangiogenic properties of HRG. Interacts with kappa and lambda light chains of IgG molecules. Interacts with ATP5F1A; the interaction occurs on the surface of T-cells and alters their cell morphology in concert with CONA. Binds IgG molecules containing kappa and lambda light chains and inhibits the formation of insoluble immunoglobulin complexes. Interacts with F12; the interaction, which is enhanced in the presence of zinc ions and inhibited by heparin-binding to HRG, inhibits factor XII autoactivation and contact-initiated coagulation. Interacts with PLG (via its Kringle domains); the interaction tethers PLG to the cell surface and enhances its activation. Interacts (via the HRR domain) with TPM1; the interaction appears to contribute to the antiangiogenic properties of the HRR domain. Interacts with THBS2; the interaction blocks the antiangiogenic effect of THBS2 with CD36. Zn(2+) serves as cofactor. Proteolytic cleavage produces several HRG fragments which are mostly disulfide-linked and, therefore, not released. Cleavage by plasmin is inhibited in the presence of heparin, zinc ions or in an acidic environment. Cleavage reduces binding of HRG to heparan sulfate, but enhances the ability of HRG to bind and tether plasminogen to the cell surface. On platelet activation, releases a 33 kDa antiangiogenic peptide which encompasses the HRR. Also cleaved in the C-terminal by plasmin. Post-translationally, N-glycosylated. As to expression, expressed in liver, blood plasma, serum and in platelets. Also present in fibrin clots, wound fluid from acute wounds and chronic leg ulcers.

Its subcellular location is the secreted. Functionally, plasma glycoprotein that binds a number of ligands such as heme, heparin, heparan sulfate, thrombospondin, plasminogen, and divalent metal ions. Binds heparin and heparin/glycosaminoglycans in a zinc-dependent manner. Binds heparan sulfate on the surface of liver, lung, kidney and heart endothelial cells. Binds to N-sulfated polysaccharide chains on the surface of liver endothelial cells. Inhibits rosette formation. Acts as an adapter protein and is implicated in regulating many processes such as immune complex and pathogen clearance, cell chemotaxis, cell adhesion, angiogenesis, coagulation and fibrinolysis. Mediates clearance of necrotic cells through enhancing the phagocytosis of necrotic cells in a heparan sulfate-dependent pathway. This process can be regulated by the presence of certain HRG ligands such as heparin and zinc ions. Binds to IgG subclasses of immunoglobins containing kappa and lambda light chains with different affinities regulating their clearance and inhibiting the formation of insoluble immune complexes. Tethers plasminogen to the cell surface. Binds T-cells and alters the cell morphology. Acts as a regulator of the vascular endothelial growth factor (VEGF) signaling pathway; inhibits endothelial cell motility by reducing VEGF-induced complex formation between PXN/paxillin and ILK/integrin-linked protein kinase and by promoting inhibition of VEGF-induced tyrosine phosphorylation of focal adhesion kinases and alpha-actinins in endothelial cells. Also plays a role in the regulation of tumor angiogenesis and tumor immune surveillance. Normalizes tumor vessels and promotes antitumor immunity by polarizing tumor-associated macrophages, leading to decreased tumor growth and metastasis. Modulates angiogenesis by blocking the CD6-mediated antiangiongenic effect of thrombospondins, THBS1 and THBS2. The protein is Histidine-rich glycoprotein (Hrg) of Mus musculus (Mouse).